The chain runs to 491 residues: Protein nucleotidyltransferase YdiU (491 aa).

ATP contacts are provided by G94, G96, R97, K117, D129, G130, R180, and R187. The active-site Proton acceptor is the D256. Residues N257 and D266 each contribute to the Mg(2+) site. D266 contacts ATP.

Belongs to the SELO family. Requires Mg(2+) as cofactor. It depends on Mn(2+) as a cofactor.

The enzyme catalyses L-seryl-[protein] + ATP = 3-O-(5'-adenylyl)-L-seryl-[protein] + diphosphate. It catalyses the reaction L-threonyl-[protein] + ATP = 3-O-(5'-adenylyl)-L-threonyl-[protein] + diphosphate. The catalysed reaction is L-tyrosyl-[protein] + ATP = O-(5'-adenylyl)-L-tyrosyl-[protein] + diphosphate. It carries out the reaction L-histidyl-[protein] + UTP = N(tele)-(5'-uridylyl)-L-histidyl-[protein] + diphosphate. The enzyme catalyses L-seryl-[protein] + UTP = O-(5'-uridylyl)-L-seryl-[protein] + diphosphate. It catalyses the reaction L-tyrosyl-[protein] + UTP = O-(5'-uridylyl)-L-tyrosyl-[protein] + diphosphate. Its function is as follows. Nucleotidyltransferase involved in the post-translational modification of proteins. It can catalyze the addition of adenosine monophosphate (AMP) or uridine monophosphate (UMP) to a protein, resulting in modifications known as AMPylation and UMPylation. This is Protein nucleotidyltransferase YdiU from Clostridium botulinum (strain Alaska E43 / Type E3).